We begin with the raw amino-acid sequence, 358 residues long: Phosphoserine aminotransferase (358 aa).

R41 lines the L-glutamate pocket. Residues 75-76, W100, T148, D167, and Q190 contribute to the pyridoxal 5'-phosphate site; that span reads AS. K191 carries the post-translational modification N6-(pyridoxal phosphate)lysine. 233–234 lines the pyridoxal 5'-phosphate pocket; it reads NT.

This sequence belongs to the class-V pyridoxal-phosphate-dependent aminotransferase family. SerC subfamily. Homodimer. It depends on pyridoxal 5'-phosphate as a cofactor.

Its subcellular location is the cytoplasm. It carries out the reaction O-phospho-L-serine + 2-oxoglutarate = 3-phosphooxypyruvate + L-glutamate. It catalyses the reaction 4-(phosphooxy)-L-threonine + 2-oxoglutarate = (R)-3-hydroxy-2-oxo-4-phosphooxybutanoate + L-glutamate. It functions in the pathway amino-acid biosynthesis; L-serine biosynthesis; L-serine from 3-phospho-D-glycerate: step 2/3. The protein operates within cofactor biosynthesis; pyridoxine 5'-phosphate biosynthesis; pyridoxine 5'-phosphate from D-erythrose 4-phosphate: step 3/5. In terms of biological role, catalyzes the reversible conversion of 3-phosphohydroxypyruvate to phosphoserine and of 3-hydroxy-2-oxo-4-phosphonooxybutanoate to phosphohydroxythreonine. This chain is Phosphoserine aminotransferase, found in Campylobacter jejuni (strain RM1221).